Here is a 280-residue protein sequence, read N- to C-terminus: Tritrans,polycis-undecaprenyl-diphosphate synthase (geranylgeranyl-diphosphate specific) (280 aa).

The active site involves Asp-57. Asp-57 lines the Mg(2+) pocket. Substrate contacts are provided by residues Gly-58–Arg-61, Arg-70, His-74, and Ser-102–Glu-104. Asn-105 serves as the catalytic Proton acceptor. Residues Phe-106, Arg-108, Arg-229, and Arg-235–Ser-237 each bind substrate. Position 248 (Glu-248) interacts with Mg(2+).

It belongs to the UPP synthase family. In terms of assembly, homodimer. It depends on Mg(2+) as a cofactor.

The enzyme catalyses geranylgeranyl diphosphate + 7 isopentenyl diphosphate = tri-trans,hepta-cis-undecaprenyl diphosphate + 7 diphosphate. In terms of biological role, catalyzes the sequential condensation of isopentenyl diphosphate (IPP) with geranylgeranyl diphosphate (GGPP) to yield (2Z,6Z,10Z,14Z,18Z,22Z,26Z,30E,34E,38E)-undecaprenyl diphosphate (tritrans,heptacis-UPP). It is probably the precursor of glycosyl carrier lipids. The polypeptide is Tritrans,polycis-undecaprenyl-diphosphate synthase (geranylgeranyl-diphosphate specific) (Methanocaldococcus jannaschii (strain ATCC 43067 / DSM 2661 / JAL-1 / JCM 10045 / NBRC 100440) (Methanococcus jannaschii)).